We begin with the raw amino-acid sequence, 315 residues long: uncharacterized protein (315 aa).

2 coiled-coil regions span residues Ala184–Gln212 and Glu238–Lys275.

The protein belongs to the IIV-6 287R family.

This is an uncharacterized protein from Acheta domesticus (House cricket).